The chain runs to 273 residues: Dermonecrotic toxin LdSicTox-alphaIB3aiv (273 aa).

Residue H5 is part of the active site. Mg(2+) is bound by residues E25 and D27. Catalysis depends on H41, which acts as the Nucleophile. 2 disulfide bridges follow: C45-C51 and C47-C190. D85 serves as a coordination point for Mg(2+).

It belongs to the arthropod phospholipase D family. Class II subfamily. It depends on Mg(2+) as a cofactor. Expressed by the venom gland.

The protein localises to the secreted. The catalysed reaction is an N-(acyl)-sphingosylphosphocholine = an N-(acyl)-sphingosyl-1,3-cyclic phosphate + choline. It carries out the reaction an N-(acyl)-sphingosylphosphoethanolamine = an N-(acyl)-sphingosyl-1,3-cyclic phosphate + ethanolamine. The enzyme catalyses a 1-acyl-sn-glycero-3-phosphocholine = a 1-acyl-sn-glycero-2,3-cyclic phosphate + choline. It catalyses the reaction a 1-acyl-sn-glycero-3-phosphoethanolamine = a 1-acyl-sn-glycero-2,3-cyclic phosphate + ethanolamine. Dermonecrotic toxins cleave the phosphodiester linkage between the phosphate and headgroup of certain phospholipids (sphingolipid and lysolipid substrates), forming an alcohol (often choline) and a cyclic phosphate. This toxin acts on sphingomyelin (SM). It may also act on ceramide phosphoethanolamine (CPE), lysophosphatidylcholine (LPC) and lysophosphatidylethanolamine (LPE), but not on lysophosphatidylserine (LPS), and lysophosphatidylglycerol (LPG). It acts by transphosphatidylation, releasing exclusively cyclic phosphate products as second products. Induces dermonecrosis, hemolysis, increased vascular permeability, edema, inflammatory response, and platelet aggregation. The sequence is that of Dermonecrotic toxin LdSicTox-alphaIB3aiv from Loxosceles deserta (Desert recluse spider).